Here is a 369-residue protein sequence, read N- to C-terminus: MVEYKPNQTVYAYHGPLIYEAKILKLKNGKDSFIINQDFQHEPLEEKPNSSGNHHHHHHSQHIAKFDPKKWQDQTCYYLHYQGWNSKWDEWVGIDRIMEYNEENKFKKLELDQLTKKKKAINNNEIIVNATTKNHTNNKNKKESNKRKSSSATTTSGVTAGTNNNKKQKSASTSTTNNTSGNSGTTSNKSKQILSRLNLNFPPELKHILVNDWEYITKDRKLVSLPSQYPINQILQDYKTYRTKQLTSNSDQLSILIEILTGLEIYFNKSLSLILLYKYEHLQYLNFLKQNIINPQQDILQSNIYGVEHLLRLIISFPGLLSTTTMDGISLSVLISELESLCRFIGDRLQLYQNNYEFTSPQYDSLARS.

A Tudor-knot domain is found at 9 to 97; the sequence is TVYAYHGPLI…WDEWVGIDRI (89 aa). Disordered stretches follow at residues 43–66 and 126–191; these read PLEE…IAKF and IIVN…NKSK. Positions 53-62 are enriched in basic residues; sequence NHHHHHHSQH. Residues 126–135 show a composition bias toward low complexity; the sequence is IIVNATTKNH. The segment covering 136-149 has biased composition (basic residues); the sequence is TNNKNKKESNKRKS. Over residues 150–191 the composition is skewed to low complexity; it reads SSATTTSGVTAGTNNNKKQKSASTSTTNNTSGNSGTTSNKSK. An MRG domain is found at 193–368; it reads ILSRLNLNFP…TSPQYDSLAR (176 aa).

It belongs to the MRG family. In terms of assembly, component of the NuA4 histone acetyltransferase complex.

Its subcellular location is the nucleus. Its function is as follows. Involved in deacetylation of histones, chromatin assembly and chromosome segregation. May act as a transcriptional oscillator, directing histone deacetylases to specific chromosomal domains. Component of the NuA4 histone acetyltransferase complex which is involved in transcriptional activation of selected genes principally by acetylation of nucleosomal histone H4 and H2A. The NuA4 complex is also involved in DNA repair. This chain is Chromatin modification-related protein EAF3 (EAF3), found in Candida albicans (strain SC5314 / ATCC MYA-2876) (Yeast).